A 306-amino-acid polypeptide reads, in one-letter code: D-alanine--D-alanine ligase (306 aa).

Residues 105 to 300 enclose the ATP-grasp domain; sequence KMIWQAAGIS…FDELVIQILE (196 aa). Residue 131–186 coordinates ATP; that stretch reads TDRLGLPLIIKPAREGSTIGLNKVDYAQDMQSAYQTAAQHDSLVIAEQFIQGIELT. The Mg(2+) site is built by D254, E267, and N269.

This sequence belongs to the D-alanine--D-alanine ligase family. Mg(2+) serves as cofactor. Requires Mn(2+) as cofactor.

The protein localises to the cytoplasm. The catalysed reaction is 2 D-alanine + ATP = D-alanyl-D-alanine + ADP + phosphate + H(+). The protein operates within cell wall biogenesis; peptidoglycan biosynthesis. Functionally, cell wall formation. In Nitrosomonas eutropha (strain DSM 101675 / C91 / Nm57), this protein is D-alanine--D-alanine ligase.